The primary structure comprises 588 residues: BTB/POZ domain-containing protein At3g26490 (588 aa).

The BTB domain maps to 28 to 99; it reads NDLVIQVKST…CYGITITLCA (72 aa). Residues 218 to 507 form the NPH3 domain; sequence RWWGEDLAEL…VQILFVEQAR (290 aa). Ser376 and Ser378 each carry phosphoserine. Position 448 is a phosphotyrosine (Tyr448). A disordered region spans residues 529 to 554; sequence FTTRREEGGQEEEERDETKPSGGFLQ.

It belongs to the NPH3 family.

The protein operates within protein modification; protein ubiquitination. Its function is as follows. May act as a substrate-specific adapter of an E3 ubiquitin-protein ligase complex (CUL3-RBX1-BTB) which mediates the ubiquitination and subsequent proteasomal degradation of target proteins. In Arabidopsis thaliana (Mouse-ear cress), this protein is BTB/POZ domain-containing protein At3g26490.